Reading from the N-terminus, the 328-residue chain is 3-dehydroquinate synthase (328 aa).

This sequence belongs to the archaeal-type DHQ synthase family.

The catalysed reaction is 2-amino-2,3,7-trideoxy-D-lyxo-hept-6-ulosonate + NAD(+) + H2O = 3-dehydroquinate + NH4(+) + NADH + H(+). Catalyzes the oxidative deamination and cyclization of 2-amino-3,7-dideoxy-D-threo-hept-6-ulosonic acid (ADH) to yield 3-dehydroquinate (DHQ), which is fed into the canonical shikimic pathway of aromatic amino acid biosynthesis. The chain is 3-dehydroquinate synthase from Methanosphaerula palustris (strain ATCC BAA-1556 / DSM 19958 / E1-9c).